A 272-amino-acid polypeptide reads, in one-letter code: ATP synthase subunit delta (272 aa).

Belongs to the ATPase delta chain family. In terms of assembly, F-type ATPases have 2 components, F(1) - the catalytic core - and F(0) - the membrane proton channel. F(1) has five subunits: alpha(3), beta(3), gamma(1), delta(1), epsilon(1). F(0) has three main subunits: a(1), b(2) and c(10-14). The alpha and beta chains form an alternating ring which encloses part of the gamma chain. F(1) is attached to F(0) by a central stalk formed by the gamma and epsilon chains, while a peripheral stalk is formed by the delta and b chains.

It localises to the cell membrane. Its function is as follows. F(1)F(0) ATP synthase produces ATP from ADP in the presence of a proton or sodium gradient. F-type ATPases consist of two structural domains, F(1) containing the extramembraneous catalytic core and F(0) containing the membrane proton channel, linked together by a central stalk and a peripheral stalk. During catalysis, ATP synthesis in the catalytic domain of F(1) is coupled via a rotary mechanism of the central stalk subunits to proton translocation. In terms of biological role, this protein is part of the stalk that links CF(0) to CF(1). It either transmits conformational changes from CF(0) to CF(1) or is implicated in proton conduction. The chain is ATP synthase subunit delta from Corynebacterium urealyticum (strain ATCC 43042 / DSM 7109).